Reading from the N-terminus, the 169-residue chain is MHSRKGASSLPRGRGAGKKTELTEEQRQEIKEAFDLFDTDGSGCIDAKELKVAMRALGFEPKKEEIRKMIADVDKDGTGSVDFQEFLSLMTVKMAERDPREEILKAFRLFDDDETGKISFKNLKRVSKELGENLTDEELQEMIDEADRDGDGEINEEEFIRIMRKTNLF.

An essential for homooligomerization region spans residues 1-21 (MHSRKGASSLPRGRGAGKKTE). Residues 1–25 (MHSRKGASSLPRGRGAGKKTELTEE) are disordered. 4 EF-hand domains span residues 25 to 60 (EQRQ…LGFE), 61 to 96 (PKKE…KMAE), 98 to 133 (DPRE…LGEN), and 134 to 169 (LTDE…TNLF). 10 residues coordinate Ca(2+): Asp38, Asp40, Ser42, Cys44, Glu49, Asp74, Asp76, Thr78, Ser80, and Glu85.

Belongs to the centrin family. In terms of assembly, monomer. Homooligomerizes in a Ca(2+)-dependent manner. Interaction via the C-terminus with other proteins disrupts and/or prevents homooligomerization. Interacts with SFI1.

The protein resides in the cytoplasm. The protein localises to the cytoskeleton. It localises to the microtubule organizing center. Its subcellular location is the centrosome. Its function is as follows. Acts as a calcium sensor. Part of the centrosome outer core complex. The polypeptide is Centrin-1 (Toxoplasma gondii (strain ATCC 50611 / Me49)).